The chain runs to 272 residues: Indole-3-glycerol phosphate synthase (272 aa).

It belongs to the TrpC family.

The enzyme catalyses 1-(2-carboxyphenylamino)-1-deoxy-D-ribulose 5-phosphate + H(+) = (1S,2R)-1-C-(indol-3-yl)glycerol 3-phosphate + CO2 + H2O. The protein operates within amino-acid biosynthesis; L-tryptophan biosynthesis; L-tryptophan from chorismate: step 4/5. This chain is Indole-3-glycerol phosphate synthase, found in Paenarthrobacter aurescens (strain TC1).